Here is a 221-residue protein sequence, read N- to C-terminus: Thiamine-phosphate synthase (221 aa).

Residues 44 to 48 and asparagine 79 contribute to the 4-amino-2-methyl-5-(diphosphooxymethyl)pyrimidine site; that span reads QFREK. Mg(2+)-binding residues include aspartate 80 and aspartate 99. Serine 117 lines the 4-amino-2-methyl-5-(diphosphooxymethyl)pyrimidine pocket. 143-145 is a binding site for 2-[(2R,5Z)-2-carboxy-4-methylthiazol-5(2H)-ylidene]ethyl phosphate; that stretch reads TRS. Lysine 146 provides a ligand contact to 4-amino-2-methyl-5-(diphosphooxymethyl)pyrimidine. Residues glycine 175 and 195-196 each bind 2-[(2R,5Z)-2-carboxy-4-methylthiazol-5(2H)-ylidene]ethyl phosphate; that span reads IS.

Belongs to the thiamine-phosphate synthase family. Mg(2+) is required as a cofactor.

It carries out the reaction 2-[(2R,5Z)-2-carboxy-4-methylthiazol-5(2H)-ylidene]ethyl phosphate + 4-amino-2-methyl-5-(diphosphooxymethyl)pyrimidine + 2 H(+) = thiamine phosphate + CO2 + diphosphate. The catalysed reaction is 2-(2-carboxy-4-methylthiazol-5-yl)ethyl phosphate + 4-amino-2-methyl-5-(diphosphooxymethyl)pyrimidine + 2 H(+) = thiamine phosphate + CO2 + diphosphate. The enzyme catalyses 4-methyl-5-(2-phosphooxyethyl)-thiazole + 4-amino-2-methyl-5-(diphosphooxymethyl)pyrimidine + H(+) = thiamine phosphate + diphosphate. The protein operates within cofactor biosynthesis; thiamine diphosphate biosynthesis; thiamine phosphate from 4-amino-2-methyl-5-diphosphomethylpyrimidine and 4-methyl-5-(2-phosphoethyl)-thiazole: step 1/1. Functionally, condenses 4-methyl-5-(beta-hydroxyethyl)thiazole monophosphate (THZ-P) and 2-methyl-4-amino-5-hydroxymethyl pyrimidine pyrophosphate (HMP-PP) to form thiamine monophosphate (TMP). In Geobacillus thermodenitrificans (strain NG80-2), this protein is Thiamine-phosphate synthase.